The primary structure comprises 86 residues: Large ribosomal subunit protein bL27 (86 aa).

Positions 1-31 are disordered; sequence MAHKKAGGSSRNGRDSAGQRRGVKKFGGEPV.

Belongs to the bacterial ribosomal protein bL27 family.

The protein is Large ribosomal subunit protein bL27 of Desulfotalea psychrophila (strain LSv54 / DSM 12343).